The chain runs to 98 residues: NADH-ubiquinone oxidoreductase chain 4L (98 aa).

A run of 3 helical transmembrane segments spans residues Met-1–Val-21, Thr-29–Thr-49, and Leu-59–Val-79.

It belongs to the complex I subunit 4L family. Core subunit of respiratory chain NADH dehydrogenase (Complex I) which is composed of 45 different subunits.

The protein localises to the mitochondrion inner membrane. It catalyses the reaction a ubiquinone + NADH + 5 H(+)(in) = a ubiquinol + NAD(+) + 4 H(+)(out). Core subunit of the mitochondrial membrane respiratory chain NADH dehydrogenase (Complex I) which catalyzes electron transfer from NADH through the respiratory chain, using ubiquinone as an electron acceptor. Part of the enzyme membrane arm which is embedded in the lipid bilayer and involved in proton translocation. In Notoryctes typhlops (Southern marsupial mole), this protein is NADH-ubiquinone oxidoreductase chain 4L (MT-ND4L).